The primary structure comprises 414 residues: UDP-N-acetylglucosamine 1-carboxyvinyltransferase (414 aa).

Position 19–20 (Lys19–Asn20) interacts with phosphoenolpyruvate. Arg89 contributes to the UDP-N-acetyl-alpha-D-glucosamine binding site. Residue Cys113 is the Proton donor of the active site. Cys113 is subject to 2-(S-cysteinyl)pyruvic acid O-phosphothioketal. Residues Arg118–Leu122, Asp301, and Val323 each bind UDP-N-acetyl-alpha-D-glucosamine.

This sequence belongs to the EPSP synthase family. MurA subfamily.

It localises to the cytoplasm. It catalyses the reaction phosphoenolpyruvate + UDP-N-acetyl-alpha-D-glucosamine = UDP-N-acetyl-3-O-(1-carboxyvinyl)-alpha-D-glucosamine + phosphate. It participates in cell wall biogenesis; peptidoglycan biosynthesis. In terms of biological role, cell wall formation. Adds enolpyruvyl to UDP-N-acetylglucosamine. This chain is UDP-N-acetylglucosamine 1-carboxyvinyltransferase, found in Bdellovibrio bacteriovorus (strain ATCC 15356 / DSM 50701 / NCIMB 9529 / HD100).